We begin with the raw amino-acid sequence, 525 residues long: GMP synthase [glutamine-hydrolyzing] (525 aa).

One can recognise a Glutamine amidotransferase type-1 domain in the interval 9-207; it reads RILILDFGSQ…VRDICQCEAL (199 aa). Cysteine 86 (nucleophile) is an active-site residue. Active-site residues include histidine 181 and glutamate 183. The GMPS ATP-PPase domain occupies 208 to 400; it reads WTPAKIIDDA…LGLPYDMLYR (193 aa). Residue 235-241 coordinates ATP; the sequence is SGGVDSS.

As to quaternary structure, homodimer.

It catalyses the reaction XMP + L-glutamine + ATP + H2O = GMP + L-glutamate + AMP + diphosphate + 2 H(+). The protein operates within purine metabolism; GMP biosynthesis; GMP from XMP (L-Gln route): step 1/1. Functionally, catalyzes the synthesis of GMP from XMP. The protein is GMP synthase [glutamine-hydrolyzing] of Shigella boydii serotype 4 (strain Sb227).